The chain runs to 150 residues: Ribosomal RNA large subunit methyltransferase H (150 aa).

S-adenosyl-L-methionine-binding positions include A100 and 118-123 (LSEMTF).

This sequence belongs to the RNA methyltransferase RlmH family. Homodimer.

The protein localises to the cytoplasm. It carries out the reaction pseudouridine(1915) in 23S rRNA + S-adenosyl-L-methionine = N(3)-methylpseudouridine(1915) in 23S rRNA + S-adenosyl-L-homocysteine + H(+). In terms of biological role, specifically methylates the pseudouridine at position 1915 (m3Psi1915) in 23S rRNA. The sequence is that of Ribosomal RNA large subunit methyltransferase H from Helicobacter pylori (strain P12).